The sequence spans 424 residues: CAAX prenyl protease 1 homolog (424 aa).

5 helical membrane passes run 3–23, 67–87, 109–129, 155–175, and 185–205; these read IPFMETVVGFMIVMYIFETYL, EFVTILMDSAILFFGILPWFW, LSFLAGVMTWSQITDLPFSLY, GTFLSVILGPPIVAAIIFIVQ, and LWAFMFILSLVMMTIYPVLIA. His-284 contacts Zn(2+). Residue Glu-285 is part of the active site. Residue His-288 participates in Zn(2+) binding. The next 2 membrane-spanning stretches (helical) occupy residues 295–315 and 332–352; these read TYSFIAVQILAFLQFGGYTLV and VLIGLIIFQHTVIPLQHLVSF. Glu-362 contributes to the Zn(2+) binding site. The active-site Proton donor is the Asp-366.

This sequence belongs to the peptidase M48A family. Zn(2+) serves as cofactor. In terms of tissue distribution, expressed in leaves, stems and flowers.

The protein resides in the endoplasmic reticulum membrane. It carries out the reaction Hydrolyzes the peptide bond -P2-(S-farnesyl or geranylgeranyl)C-P1'-P2'-P3'-COOH where P1' and P2' are amino acids with aliphatic side chains and P3' is any C-terminal residue.. In terms of biological role, proteolytically removes the C-terminal three residues of farnesylated proteins. The substrate specificity is only partially overlapping with that of FACE2. The protein is CAAX prenyl protease 1 homolog (FACE1) of Arabidopsis thaliana (Mouse-ear cress).